The primary structure comprises 428 residues: Monocarboxylate transporter 13 (428 aa).

Residues 1–10 lie on the Cytoplasmic side of the membrane; sequence MVHRTEPPDG. 12 consecutive transmembrane segments (helical) span residues 11–31, 52–72, 81–101, 106–126, 139–159, 172–192, 221–241, 244–264, 283–303, 309–329, 338–358, and 374–394; these read GWGW…FGVL, VSWI…IGSA, PVVM…SFAT, LYLS…TPTL, LAMG…APLF, LLLV…LRPL, VALT…VAHL, LGWD…SDLV, LLML…VAQA, VLAV…FSVI, IYCG…LGAP, and FVVA…LPHF. The Cytoplasmic segment spans residues 395 to 428; that stretch reads FSCISLSTSRPQDLVIEAPDTKIPLPKEEGLGEN.

This sequence belongs to the major facilitator superfamily. Monocarboxylate porter (TC 2.A.1.13) family.

Its subcellular location is the golgi apparatus membrane. The protein localises to the cell membrane. Its function is as follows. Proton-linked monocarboxylate transporter. May catalyze the transport of monocarboxylates across the plasma membrane. This is Monocarboxylate transporter 13 (Slc16a13) from Rattus norvegicus (Rat).